The sequence spans 103 residues: SOSS complex subunit C (103 aa).

Belongs to the SOSS-C family. Belongs to the multiprotein complex Integrator. Component of the SOSS complex, composed of SOSS-B (SOSS-B1/NABP2 or SOSS-B2/NABP1), SOSS-A/INTS3 and SOSS-C/INIP.

The protein localises to the nucleus. Functionally, component of the SOSS complex, a multiprotein complex that functions downstream of the MRN complex to promote DNA repair and G2/M checkpoint. The SOSS complex associates with single-stranded DNA at DNA lesions and influences diverse endpoints in the cellular DNA damage response including cell-cycle checkpoint activation, recombinational repair and maintenance of genomic stability. Required for efficient homologous recombination-dependent repair of double-strand breaks (DSBs). The protein is SOSS complex subunit C (INIP) of Gallus gallus (Chicken).